The chain runs to 348 residues: Ion-translocating oxidoreductase complex subunit D (348 aa).

3 helical membrane-spanning segments follow: residues 25–45 (ILAALPGLAVQCYFFGWGTFI), 68–88 (PISPTLMDQSAVLTALLIGVA), and 124–144 (AMAAYVLLLVSFPVLMTTWAA). Threonine 182 carries the FMN phosphoryl threonine modification. The next 5 helical transmembrane spans lie at 211–231 (TGEGWFWVNLAYLCGGLFLLA), 237–257 (WHISGGLIGALFVCSLFGFGA), 263–283 (ASPLFNLFSGATMLAAFFIAT), 296–316 (LLFGAMIGVLIYLIRTFGGYP), and 317–337 (DGVAFAVLLANLCAPLIDYYI).

This sequence belongs to the NqrB/RnfD family. In terms of assembly, the complex is composed of six subunits: RnfA, RnfB, RnfC, RnfD, RnfE and RnfG. FMN is required as a cofactor.

Its subcellular location is the cell inner membrane. Functionally, part of a membrane-bound complex that couples electron transfer with translocation of ions across the membrane. The chain is Ion-translocating oxidoreductase complex subunit D from Shewanella amazonensis (strain ATCC BAA-1098 / SB2B).